Consider the following 341-residue polypeptide: UPF0283 membrane protein VV2076 (341 aa).

4 helical membrane passes run 64–84 (LAGGLFAAFAGLVGWQAVDSV), 93–113 (WLTLGWSGFISVLAGLGLGAM), 207–227 (ESAALVAISPLAIADMLLVAW), and 255–275 (LVLANMAVAGASELVIDAGMD).

Belongs to the UPF0283 family.

Its subcellular location is the cell inner membrane. The protein is UPF0283 membrane protein VV2076 of Vibrio vulnificus (strain YJ016).